Reading from the N-terminus, the 214-residue chain is Adenylate kinase (214 aa).

Residue 10–15 (GAGKGT) coordinates ATP. Residues 30–59 (CTGDMLRAAVKAGSELGLKAKEIMDAGKLV) form an NMP region. AMP contacts are provided by residues Thr31, Arg36, 57 to 59 (KLV), 85 to 88 (GFPR), and Gln92. Residues 122–159 (GRRVHAASGRVYHIKFNPPKVEDKDDVTGEELTIRKDD) form an LID region. Residues Arg123 and 132–133 (VY) each bind ATP. AMP contacts are provided by Arg156 and Arg167. Arg200 provides a ligand contact to ATP.

It belongs to the adenylate kinase family. As to quaternary structure, monomer.

It is found in the cytoplasm. The enzyme catalyses AMP + ATP = 2 ADP. It functions in the pathway purine metabolism; AMP biosynthesis via salvage pathway; AMP from ADP: step 1/1. Functionally, catalyzes the reversible transfer of the terminal phosphate group between ATP and AMP. Plays an important role in cellular energy homeostasis and in adenine nucleotide metabolism. This Yersinia enterocolitica protein is Adenylate kinase.